The sequence spans 957 residues: SH3 domain-binding protein 4-B (957 aa).

The 60-residue stretch at 54–113 (ENVKEVVAIKDYCPNNFTTLKFSKGEHLYVLDASGGDWWYAHNTTEMGYIPSSYVQPLNY) folds into the SH3 1 domain. Positions 312–449 (TSIVCRLDSS…LEPVMYVVMV (138 aa)) constitute a ZU5 domain. The 71-residue stretch at 649–719 (TSLKYGKLIK…HAKNVLVVGK (71 aa)) folds into the SH3 2 domain.

As to quaternary structure, homodimer or homooligomer.

It localises to the membrane. Its subcellular location is the clathrin-coated pit. It is found in the cytoplasmic vesicle. The protein localises to the clathrin-coated vesicle. The protein resides in the nucleus. In terms of biological role, possible role in regulating endocytosis of the transferrin receptor at the plasma membrane. Alternatively, may function as a negative regulator of the amino acid-induced TOR signaling by inhibiting the formation of active Rag GTPase complexes. Preferentially binds inactive Rag GTPase complexes and prevents their interaction with the mTORC1 complex inhibiting its relocalization to lysosomes and its activation. Thereby, may indirectly regulate cell growth, proliferation and autophagy. The chain is SH3 domain-binding protein 4-B (sh3bp4-b) from Xenopus laevis (African clawed frog).